The following is a 625-amino-acid chain: Interferon-induced GTP-binding protein Mx2 (625 aa).

The 274-residue stretch at 29–302 folds into the Dynamin-type G domain; it reads DLALPAIAVI…LVFHIGRCLP (274 aa). A G1 motif region spans residues 39 to 46; that stretch reads GDQSSGKS. A GTP-binding site is contributed by 39–46; the sequence is GDQSSGKS. A G2 motif region spans residues 64-66; sequence VTR. The tract at residues 140–143 is G3 motif; it reads DLPG. Residues 140-144 and 209-212 each bind GTP; these read DLPGI and TKPD. The segment at 209-212 is G4 motif; that stretch reads TKPD. The interval 241–244 is G5 motif; that stretch reads RCRG. One can recognise a GED domain in the interval 539 to 625; sequence REELTCHLKS…TEALKYLAKF (87 aa).

This sequence belongs to the TRAFAC class dynamin-like GTPase superfamily. Dynamin/Fzo/YdjA family.

It is found in the cytoplasm. In Ictalurus punctatus (Channel catfish), this protein is Interferon-induced GTP-binding protein Mx2 (mx2).